A 202-amino-acid polypeptide reads, in one-letter code: Small ribosomal subunit protein uS4c (202 aa).

Positions 90–154 constitute an S4 RNA-binding domain; it reads MRLDNILFRL…SQSIITKNLN (65 aa).

It belongs to the universal ribosomal protein uS4 family. As to quaternary structure, part of the 30S ribosomal subunit. Contacts protein S5. The interaction surface between S4 and S5 is involved in control of translational fidelity.

The protein resides in the plastid. Its subcellular location is the chloroplast. In terms of biological role, one of the primary rRNA binding proteins, it binds directly to 16S rRNA where it nucleates assembly of the body of the 30S subunit. Functionally, with S5 and S12 plays an important role in translational accuracy. This is Small ribosomal subunit protein uS4c (rps4) from Monoclea forsteri (Liverwort).